The following is a 156-amino-acid chain: Methylated-DNA--protein-cysteine methyltransferase (156 aa).

Cysteine 120 (nucleophile; methyl group acceptor) is an active-site residue.

This sequence belongs to the MGMT family.

Its subcellular location is the cytoplasm. It carries out the reaction a 6-O-methyl-2'-deoxyguanosine in DNA + L-cysteinyl-[protein] = S-methyl-L-cysteinyl-[protein] + a 2'-deoxyguanosine in DNA. The enzyme catalyses a 4-O-methyl-thymidine in DNA + L-cysteinyl-[protein] = a thymidine in DNA + S-methyl-L-cysteinyl-[protein]. In terms of biological role, involved in the cellular defense against the biological effects of O6-methylguanine (O6-MeG) and O4-methylthymine (O4-MeT) in DNA. Repairs the methylated nucleobase in DNA by stoichiometrically transferring the methyl group to a cysteine residue in the enzyme. This is a suicide reaction: the enzyme is irreversibly inactivated. The protein is Methylated-DNA--protein-cysteine methyltransferase of Metallosphaera sedula (strain ATCC 51363 / DSM 5348 / JCM 9185 / NBRC 15509 / TH2).